Reading from the N-terminus, the 183-residue chain is Protein GrpE (183 aa).

The segment covering 1-14 (MSNEENKINEEALK) has biased composition (basic and acidic residues). A disordered region spans residues 1 to 20 (MSNEENKINEEALKQQDAAE).

The protein belongs to the GrpE family. In terms of assembly, homodimer.

The protein resides in the cytoplasm. Functionally, participates actively in the response to hyperosmotic and heat shock by preventing the aggregation of stress-denatured proteins, in association with DnaK and GrpE. It is the nucleotide exchange factor for DnaK and may function as a thermosensor. Unfolded proteins bind initially to DnaJ; upon interaction with the DnaJ-bound protein, DnaK hydrolyzes its bound ATP, resulting in the formation of a stable complex. GrpE releases ADP from DnaK; ATP binding to DnaK triggers the release of the substrate protein, thus completing the reaction cycle. Several rounds of ATP-dependent interactions between DnaJ, DnaK and GrpE are required for fully efficient folding. The chain is Protein GrpE from Vibrio vulnificus (strain CMCP6).